A 969-amino-acid polypeptide reads, in one-letter code: MMISTAYQSLFLTALFSAISIAVGNVYQTLNVIGDRNVTIPTNGIPQRLSVYDPYRGVNCQGYQAVNISESQNGVTAYLALLGEPCYAYGTDYPLLFLNVTYEEADRVHISIKDANNTQFQFTSRKDLWDAPLYSPSYNNTNLLYNFSYNANPFEFWVTRKSDGEVLFDTRGQKLVFEDQYIELTTNMVENYNLYGLAETIHGLRLGNNLTRTFWANDEPSPVDQNMYGSHPYYLEQRYKADGINSTLNETTYTSSSHGVLMLTANGMDVLLRQDYLQYRMIGGVIDLFVYSGSTESPKETVKQFVQSIGKPAMHQYWTLGYHSCRWGYTNITEIMDVRQNYIDADIPVETFWSDIDYMEKYRDFTVDPVSYSKSDMQTFFSDLVSNHQHYVPIIDAAIYAANPYNHTDDSYYPYYAGVEKDIFLKNPNGSIYIGAVWPGFTAFPDFTNPDVVDYWKDCLINLTYAFGSNGTVPFSGIWTDMNEPSSFCVGSCGSAMIDLNPAEPLTGISKQYSIPEGFNVSNVTEYSSAYSASLSNYYATATSSVFQIVSPTATPLGLKPDYNIDWPPYAINNEQGNHDIANHIVSPNATTHDGTQRYDIFNMYGYGETKVSYAALTQISPNERPFILSRSTFLGSGVYGAHWLGDNHSLWSNMFFSISGMIVFNMMGIPMVGADVCGFLGDSDEELCSRWMAMGAFSPFYRNHNNIYQISQEPYTWSSVAEASRRAMYIRYSLLPYWYTIMAKASQDGTPALRALFVEFPNDPTLADVDRQFMVGDSLLVTPVLEPNVEYVQGVFPGDNSTVWYDWYNHTEIVRQYNENVTLYAPLEHINVAIRGGSVLPMQQPSLTTYESRQNPFNLLVALDRDGSATGELYLDDGVSIELNATLSVSFTFSDGVLSAVPTGSYEVSQPLANVTILGLTESPSSITLNGQNVSSFQYSNDTEELLITGLQNITSSGAFANSWNLTL.

The signal sequence occupies residues 1–24 (MMISTAYQSLFLTALFSAISIAVG). Asn37, Asn67, Asn99, Asn116, Asn139, Asn146, Asn209, Asn245, Asn249, Asn331, Asn406, Asn429, Asn462, and Asn470 each carry an N-linked (GlcNAc...) asparagine glycan. Asp481 functions as the Nucleophile in the catalytic mechanism. Glu484 is an active-site residue. Asn520, Asn523, and Asn589 each carry an N-linked (GlcNAc...) asparagine glycan. Asp647 functions as the Proton donor in the catalytic mechanism. N-linked (GlcNAc...) asparagine glycans are attached at residues Asn648, Asn801, Asn810, Asn821, Asn885, Asn915, Asn934, Asn942, Asn954, and Asn966.

This sequence belongs to the glycosyl hydrolase 31 family.

It localises to the secreted. The enzyme catalyses Hydrolysis of terminal, non-reducing (1-&gt;4)-linked alpha-D-glucose residues with release of alpha-D-glucose.. Hydrolyzes malto-oligosaccharides, but has a low activity toward soluble starch. This is Alpha-glucosidase (agl1) from Schizosaccharomyces pombe (strain 972 / ATCC 24843) (Fission yeast).